The following is a 130-amino-acid chain: Histone H2A type 2-A (130 aa).

Residues 1–22 (MSGRGKQGGKARAKAKSRSSRA) are disordered. Residue S2 is modified to N-acetylserine. Position 2 is a phosphoserine; by RPS6KA5 (S2). R4 is subject to Citrulline; alternate. R4 bears the Symmetric dimethylarginine; by PRMT5; alternate mark. An N6-(2-hydroxyisobutyryl)lysine; alternate mark is found at K6 and K10. Residue K6 is modified to N6-(beta-hydroxybutyryl)lysine; alternate. At K6 the chain carries N6-acetyllysine; alternate. The segment covering 7 to 19 (QGGKARAKAKSRS) has biased composition (basic residues). At K10 the chain carries N6-lactoyllysine; alternate. An N6-succinyllysine; alternate modification is found at K10. Glycyl lysine isopeptide (Lys-Gly) (interchain with G-Cter in ubiquitin) cross-links involve residues K14 and K16. K37 bears the N6-(2-hydroxyisobutyryl)lysine; alternate mark. At K37 the chain carries N6-(beta-hydroxybutyryl)lysine; alternate. Position 37 is an N6-crotonyllysine; alternate (K37). K75 and K76 each carry N6-(2-hydroxyisobutyryl)lysine. An N6-(2-hydroxyisobutyryl)lysine; alternate modification is found at K96. K96 carries the N6-succinyllysine; alternate modification. K96 carries the post-translational modification N6-glutaryllysine; alternate. Residue K100 is modified to N6-glutaryllysine. Q105 is subject to N5-methylglutamine. The residue at position 119 (K119) is an N6-(2-hydroxyisobutyryl)lysine; alternate. Residues K119 and K120 each carry the N6-crotonyllysine; alternate modification. An N6-glutaryllysine; alternate mark is found at K119 and K120. Residue K120 is modified to N6-(beta-hydroxybutyryl)lysine; alternate. A Glycyl lysine isopeptide (Lys-Gly) (interchain with G-Cter in ubiquitin); alternate cross-link involves residue K120. T121 bears the Phosphothreonine; by DCAF1 mark. Position 126 is an N6-(beta-hydroxybutyryl)lysine; alternate (K126). At K126 the chain carries N6-crotonyllysine; alternate. K126 bears the N6-glutaryllysine; alternate mark.

The protein belongs to the histone H2A family. As to quaternary structure, the nucleosome is a histone octamer containing two molecules each of H2A, H2B, H3 and H4 assembled in one H3-H4 heterotetramer and two H2A-H2B heterodimers. The octamer wraps approximately 147 bp of DNA. Post-translationally, deiminated on Arg-4 in granulocytes upon calcium entry. In terms of processing, monoubiquitination of Lys-120 (H2AK119Ub) by RING1, TRIM37 and RNF2/RING2 complex gives a specific tag for epigenetic transcriptional repression and participates in X chromosome inactivation of female mammals. It is involved in the initiation of both imprinted and random X inactivation. Ubiquitinated H2A is enriched in inactive X chromosome chromatin. Ubiquitination of H2A functions downstream of methylation of 'Lys-27' of histone H3 (H3K27me). H2AK119Ub by RNF2/RING2 can also be induced by ultraviolet and may be involved in DNA repair. Following DNA double-strand breaks (DSBs), it is ubiquitinated through 'Lys-63' linkage of ubiquitin moieties by the E2 ligase UBE2N and the E3 ligases RNF8 and RNF168, leading to the recruitment of repair proteins to sites of DNA damage. Ubiquitination at Lys-14 and Lys-16 (H2AK13Ub and H2AK15Ub, respectively) in response to DNA damage is initiated by RNF168 that mediates monoubiquitination at these 2 sites, and 'Lys-63'-linked ubiquitin are then conjugated to monoubiquitin; RNF8 is able to extend 'Lys-63'-linked ubiquitin chains in vitro. H2AK119Ub and ionizing radiation-induced 'Lys-63'-linked ubiquitination (H2AK13Ub and H2AK15Ub) are distinct events. Phosphorylation on Ser-2 (H2AS1ph) is enhanced during mitosis. Phosphorylation on Ser-2 by RPS6KA5/MSK1 directly represses transcription. Acetylation of H3 inhibits Ser-2 phosphorylation by RPS6KA5/MSK1. Phosphorylation at Thr-121 (H2AT120ph) by DCAF1 is present in the regulatory region of many tumor suppresor genes and down-regulates their transcription. Post-translationally, symmetric dimethylation on Arg-4 by the PRDM1/PRMT5 complex may play a crucial role in the germ-cell lineage. In terms of processing, glutamine methylation at Gln-105 (H2AQ104me) by FBL is specifically dedicated to polymerase I. It is present at 35S ribosomal DNA locus and impairs binding of the FACT complex. Crotonylation (Kcr) is specifically present in male germ cells and marks testis-specific genes in post-meiotic cells, including X-linked genes that escape sex chromosome inactivation in haploid cells. Crotonylation marks active promoters and enhancers and confers resistance to transcriptional repressors. It is also associated with post-meiotically activated genes on autosomes. Post-translationally, hydroxybutyrylation of histones is induced by starvation. In terms of processing, lactylated in macrophages by EP300/P300 by using lactoyl-CoA directly derived from endogenous or exogenous lactate, leading to stimulates gene transcription.

It is found in the nucleus. The protein localises to the chromosome. In terms of biological role, core component of nucleosome. Nucleosomes wrap and compact DNA into chromatin, limiting DNA accessibility to the cellular machineries which require DNA as a template. Histones thereby play a central role in transcription regulation, DNA repair, DNA replication and chromosomal stability. DNA accessibility is regulated via a complex set of post-translational modifications of histones, also called histone code, and nucleosome remodeling. The sequence is that of Histone H2A type 2-A (Hist2h2aa1) from Mus musculus (Mouse).